A 522-amino-acid chain; its full sequence is Cytochrome P450 714C2 (522 aa).

Residues 1–11 (MELFSSQQWLA) lie on the Lumenal side of the membrane. The helical; Signal-anchor for type III membrane protein transmembrane segment at 12–32 (LLPPIILCILLFSYVYIILWL) threads the bilayer. At 33-522 (RPERLRQKLR…KGVPLIFREL (490 aa)) the chain is on the cytoplasmic side. Cys-470 lines the heme pocket.

The protein belongs to the cytochrome P450 family. Heme is required as a cofactor.

Its subcellular location is the membrane. Functionally, probably not involved in gibberellin metabolism since over-expression of CYP714C2 in a heterologous system does not induce semi-dwarfism. This is Cytochrome P450 714C2 (CYP714C2) from Oryza sativa subsp. japonica (Rice).